We begin with the raw amino-acid sequence, 843 residues long: Protein MEI2-like 2 (843 aa).

RRM domains follow at residues 198–271 and 283–356; these read RTLF…FSIP and GTLV…LSRP.

Functionally, probable RNA-binding protein that plays a role in meiosis and vegetative growth. This Arabidopsis thaliana (Mouse-ear cress) protein is Protein MEI2-like 2 (ML2).